Consider the following 395-residue polypeptide: Protein maternal effect lethal 26 (395 aa).

The 122-residue stretch at 41–162 (KVQHTWTVKN…RDMIIVNVEI (122 aa)) folds into the MATH domain. In terms of domain architecture, BTB spans 201–269 (CDFAINVNGK…IYCGRCNKDI (69 aa)).

Interacts (via BTB domain) with cul-3. Seems to be a component of a E3 ubiquitin-protein ligase complex containing cul-3. Interacts (probably via MATH domain) with mei-1, which targets mei-1 for ubiquitin-mediated proteolysis. Interacts (probably via MATH domain) with ppfr-1, the regulatory subunit of the PP4 complex; targets ppfr-1 for ubiquitin-mediated proteolysis. May interact (via MATH domain) with unc-89 (via Ig-like C2-type domain 2/3 and, Ig-like C2-type domain 50 and fibronectin type-III domain 2). Expressed in body wall muscles.

Its subcellular location is the cytoplasm. The protein resides in the myofibril. The protein localises to the sarcomere. It is found in the m line. It localises to the i band. It functions in the pathway protein modification; protein ubiquitination. Probable substrate-specific adapter of an E3 ubiquitin-protein ligase complex which mediates the ubiquitination and subsequent proteasomal degradation of target proteins. Controls degradation of microtubule severing protein mei-1 after meiosis. Controls degradation of ppfr-1, the regulatory subunit of PP4 complex, after meiosis. In body wall muscles, involved in the organization of myosin thick filaments, likely by regulating the degradation of mei-1 downstream of unc-89. May also activate the TORC1 pathway. This chain is Protein maternal effect lethal 26 (mel-26), found in Caenorhabditis elegans.